A 321-amino-acid chain; its full sequence is MLVMLTSTLILVLMVLLAVAFLTMVERKTLGYMQLRKGPNVVGFMGLLQPIADGVKLFLKEPVWPTAASPALFIAAPIMALTLALSLWMFIPMPQSISTINLTLLVILAISSLSVYASLGSGWASNSKYALIGALRAVAQTISYEVSLGLILLCLIILTGGFSLQAFIYTQEHTWFLLSSWPLAAMWFVSTLAETNRTPFDLTEGESELVSGFNVEYAGGPFALFFLAEYSNILFMNTLTAIMFLGPLGPNNLNILPIINVMMKATPLIILFLWIRASYPRFRYDQLMHLMWKNFLPLNLALFTLQLSLAVSLGGAGVPQM.

Helical transmembrane passes span 2 to 22, 71 to 91, 104 to 124, 148 to 168, 173 to 193, 224 to 244, 255 to 275, and 295 to 315; these read LVMLTSTLILVLMVLLAVAFL, ALFIAAPIMALTLALSLWMFI, LLVILAISSLSVYASLGSGWA, LGLILLCLIILTGGFSLQAFI, HTWFLLSSWPLAAMWFVSTLA, LFFLAEYSNILFMNTLTAIMF, ILPIINVMMKATPLIILFLWI, and FLPLNLALFTLQLSLAVSLGG.

It belongs to the complex I subunit 1 family.

It is found in the mitochondrion inner membrane. The enzyme catalyses a ubiquinone + NADH + 5 H(+)(in) = a ubiquinol + NAD(+) + 4 H(+)(out). Core subunit of the mitochondrial membrane respiratory chain NADH dehydrogenase (Complex I) that is believed to belong to the minimal assembly required for catalysis. Complex I functions in the transfer of electrons from NADH to the respiratory chain. The immediate electron acceptor for the enzyme is believed to be ubiquinone. This is NADH-ubiquinone oxidoreductase chain 1 (MT-ND1) from Lampetra fluviatilis (European river lamprey).